Here is a 672-residue protein sequence, read N- to C-terminus: Amidase chyE (672 aa).

Cys2 functions as the Nucleophile in the catalytic mechanism. Residues 2-219 form the Glutamine amidotransferase type-2 domain; it reads CGISAFLCHP…PGHYLISRPN (218 aa). Residues 250 to 639 enclose the Asparagine synthetase domain; that stretch reads VRKRLLEAVK…TQEAVEKAFT (390 aa).

The protein belongs to the asparagine synthetase family.

Its pathway is pigment biosynthesis. Its function is as follows. Amidase; part of the gene cluster that mediates the biosynthesis of the yellow pigment chrysogine. the NRPS chyA mediates the condensation of anthranilic acid and alanine into the intermediate 2-(2-aminopropanamido)benzoic acid. The remainder of the pathway is highly branched yielding at least 13 chrysogine-related compounds. The malonyl transferase chyE converts 2-(2-aminopropanamido)benzoic acid and 2-(2-aminopropanamido)benzamidine into 2-(2-(2-carboxyacetamido)propanamido)benzoic acid and 3-((1-((2-carbamoylphenyl)amino)-1-oxopropan-2-yl)amino)-3-oxopropanoic acid, respectively. ChyD is an amidase, being responsible for the amidation of the carboxylic acid moiety of 2-(2-aminopropanamido)benzoic acid, 2-(2-(2-carboxyacetamido)propanamido)benzoic acid and 2-(2-((4-amino-1-carboxy-4-oxobutyl)amino)propanamido)benzoic acid. ChyC is involved in the same reactions as ChyD, but plays a more minor role in the amidation reactions compared to chyD. The oxidoreductases chyH and chyM are involved in oxidation reactions that form N-pyruvoylanthranilamide from 2-(2-aminopropanamido)benzamidine and (1-((2-carbamoylphenyl)amino)-1-oxopropan-2-yl)glutamine, respectively. N-pyruvoylanthranilamide is further converted via two further branches in the pathway, yielding chrysogine and additional chrysogine-related coumpounds. Chrysogine is likely formed by a spontaneous ring closure from N-pyruvoylanthranilamide. In Penicillium rubens (strain ATCC 28089 / DSM 1075 / NRRL 1951 / Wisconsin 54-1255) (Penicillium chrysogenum), this protein is Amidase chyE.